Here is a 294-residue protein sequence, read N- to C-terminus: Bifunctional protein FolD (294 aa).

Residues 176–178 (GAS), S201, and I242 contribute to the NADP(+) site.

It belongs to the tetrahydrofolate dehydrogenase/cyclohydrolase family. As to quaternary structure, homodimer.

The catalysed reaction is (6R)-5,10-methylene-5,6,7,8-tetrahydrofolate + NADP(+) = (6R)-5,10-methenyltetrahydrofolate + NADPH. It carries out the reaction (6R)-5,10-methenyltetrahydrofolate + H2O = (6R)-10-formyltetrahydrofolate + H(+). It functions in the pathway one-carbon metabolism; tetrahydrofolate interconversion. Its function is as follows. Catalyzes the oxidation of 5,10-methylenetetrahydrofolate to 5,10-methenyltetrahydrofolate and then the hydrolysis of 5,10-methenyltetrahydrofolate to 10-formyltetrahydrofolate. This Bordetella petrii (strain ATCC BAA-461 / DSM 12804 / CCUG 43448) protein is Bifunctional protein FolD.